The following is a 298-amino-acid chain: Beta-soluble NSF attachment protein (298 aa).

Belongs to the SNAP family. Interacts with PRKCABP, and disrupts the interaction between GRIA2 and PRKCABP, leading to the internalization of GRIA2.

The protein localises to the membrane. Its function is as follows. Required for vesicular transport between the endoplasmic reticulum and the Golgi apparatus. This chain is Beta-soluble NSF attachment protein (NAPB), found in Homo sapiens (Human).